Here is a 246-residue protein sequence, read N- to C-terminus: Bis(5'-nucleosyl)-tetraphosphatase PrpE [asymmetrical] (246 aa).

The protein belongs to the PrpE family. Ni(2+) serves as cofactor.

It catalyses the reaction P(1),P(4)-bis(5'-guanosyl) tetraphosphate + H2O = GMP + GTP + 2 H(+). Functionally, asymmetrically hydrolyzes Ap4p to yield AMP and ATP. This is Bis(5'-nucleosyl)-tetraphosphatase PrpE [asymmetrical] from Halalkalibacterium halodurans (strain ATCC BAA-125 / DSM 18197 / FERM 7344 / JCM 9153 / C-125) (Bacillus halodurans).